The primary structure comprises 177 residues: Large ribosomal subunit protein uL6 (177 aa).

It belongs to the universal ribosomal protein uL6 family. As to quaternary structure, part of the 50S ribosomal subunit.

This protein binds to the 23S rRNA, and is important in its secondary structure. It is located near the subunit interface in the base of the L7/L12 stalk, and near the tRNA binding site of the peptidyltransferase center. The polypeptide is Large ribosomal subunit protein uL6 (Latilactobacillus sakei subsp. sakei (strain 23K) (Lactobacillus sakei subsp. sakei)).